A 230-amino-acid polypeptide reads, in one-letter code: Large ribosomal subunit protein uL1 (230 aa).

Belongs to the universal ribosomal protein uL1 family. In terms of assembly, part of the 50S ribosomal subunit.

Functionally, binds directly to 23S rRNA. The L1 stalk is quite mobile in the ribosome, and is involved in E site tRNA release. Its function is as follows. Protein L1 is also a translational repressor protein, it controls the translation of the L11 operon by binding to its mRNA. This chain is Large ribosomal subunit protein uL1, found in Staphylococcus aureus (strain Mu3 / ATCC 700698).